Here is a 1875-residue protein sequence, read N- to C-terminus: MSDHDTPMESIQNGENSDERLNAIASFFGCSLEQVKSFDGDVVKHLNDKLLQFNELKSENLKVTVSFDELKASSLKKIDGLKTEMENVIRENDKIRKERNDTFVKFESVENEKMKLSSELEFVKRKLDDLTEEKKETQSNQQRTLKILDERLKEIELVRVENNRSNSECKKLRSTIMDLETKQQGYITNDLNSRTELERKTQELTLLQSNNDWLEKELRSKNEQYLSYRQKTDKVILDIRNELNRLRNDFQMERTNNDVLKQKNNELSKSLQEKLLEIKGLSDSLNSEKQEFSAEMSLKQRLVDLLESQLNAVKEELNSIRELNTAKVIADDSKKQTPENEDLLKELQLTKEKLAQCEKECLRLSSITDEADEDNENLSAKSSSDFIFLKKQLIKERRTKEHLQNQIETFIVELEHKVPIINSFKERTDMLENELNNAALLLEHTSNEKNAKVKELNAKNQKLVECENDLQTLTKQRLDLCRQIQYLLITNSVSNDSKGPLRKEEIQFIQNIMQEDDSTITESDSQKVVTERLVEFKNIIQLQEKNAELLKVVRNLADKLESKEKKSKQSLQKIESETVNEAKEAIITLKSEKMDLESRIEELQKELEELKTSVPNEDASYSNVTIKQLTETKRDLESQVQDLQTRISQITRESTENMSLLNKEIQDLYDSKSDISIKLGKEKSSRILAEERFKLLSNTLDLTKAENDQLRKRFDYLQNTILKQDSKTHETLNEYVSCKSKLSIVETELLNLKEEQKLRVHLEKNLKQELNKLSPEKDSLRIMVTQLQTLQKEREDLLEETRKSCQKKIDELEDALSELKKETSQKDHHIKQLEEDNNSNIEWYQNKIEALKKDYESVITSVDSKQTDIEKLQYKVKSLEKEIEEDKIRLHTYNVMDETINDDSLRKELEKSKINLTDAYSQIKEYKDLYETTSQSLQQTNSKLDESFKDFTNQIKNLTDEKTSLEDKISLLKEQMFNLNNELDLQKKGMEKEKADFKKRISILQNNNKEVEAVKSEYESKLSKIQNDLDQQTIYANTAQNNYEQELQKHADVSKTISELREQLHTYKGQVKTLNLSRDQLENALKENEKSWSSQKESLLEQLDLSNSRIEDLSSQNKLLYDQIQIYTAADKEVNNSTNGPGLNNILITLRRERDILDTKVTVAERDAKMLRQKISLMDVELQDARTKLDNSRVEKENHSSIIQQHDDIMEKLNQLNLLRESNITLRNELENNNNKKKELQSELDKLKQNVAPIESELTALKYSMQEKEQELKLAKEEVHRWKKRSQDILEKHEQLSSSDYEKLESEIENLKEELENKERQGAEAEEKFNRLRRQAQERLKTSKLSQDSLTEQVNSLRDAKNVLENSLSEANARIEELQNAKVAQGNNQLEAIRKLQEDAEKASRELQAKLEESTTSYESTINGLNEEITTLKEEIEKQRQIQQQLQATSANEQNDLSNIVESMKKSFEEDKIKFIKEKTQEVNEKILEAQERLNQPSNINMEEIKKKWESEHEQEVSQKIREAEEALKKRIRLPTEEKINKIIERKKEELEKEFEEKVEERIKSMEQSGEIDVVLRKQLEAKVQEKQKELENEYNKKLQEELKDVPHSSHISDDERDKLRAEIESRLREEFNNELQAIKKKSFDEGKQQAMMKTTLLERKLAKMESQLSETKQSAESPPKSVNNVQNPLLGLPRKIEENSNSPFNPLLSGEKLLKLNSKSSSGGFNPFTSPSPNKHLQNDNDKRESLANKTDPPTHLEPSFNIPASRGLISSSSTLSTDTNDEELTSNNPAQKDSSNRNVQSEEDTEKKKEGEPVKRGEAIEEQTKSNKRPIDEVGELKNDEDDTTENINESKKIKTEDEEEKETDKVNDENSI.

Ser2 carries the N-acetylserine modification. Coiled-coil stretches lie at residues 69–487 (ELKA…IQYL) and 531–1678 (ERLV…SAES). Phosphothreonine is present on Thr337. Ser379 bears the Phosphoserine mark. A Required for nuclear localization motif is present at residues 1496-1565 (QPSNINMEEI…EEKVEERIKS (70 aa)). Residues 1641-1689 (KKSFDEGKQQAMMKTTLLERKLAKMESQLSETKQSAESPPKSVNNVQNP) are disordered. Over residues 1667 to 1688 (SQLSETKQSAESPPKSVNNVQN) the composition is skewed to polar residues. Ser1670 and Ser1710 each carry phosphoserine. Residues 1716–1725 (KLNSKSSSGG) are compositionally biased toward low complexity. The disordered stretch occupies residues 1716–1875 (KLNSKSSSGG…TDKVNDENSI (160 aa)). Residues 1728–1737 (PFTSPSPNKH) show a composition bias toward polar residues. Ser1733 carries the phosphoserine modification. Positions 1738-1748 (LQNDNDKRESL) are enriched in basic and acidic residues. The segment covering 1787 to 1801 (TSNNPAQKDSSNRNV) has biased composition (polar residues). Ser1803 is modified (phosphoserine). Composition is skewed to basic and acidic residues over residues 1807 to 1840 (TEKK…GELK) and 1865 to 1875 (ETDKVNDENSI). The stretch at 1834-1866 (DEVGELKNDEDDTTENINESKKIKTEDEEEKET) forms a coiled coil.

As to quaternary structure, component of the nuclear pore complex (NPC). NPC constitutes the exclusive means of nucleocytoplasmic transport. NPCs allow the passive diffusion of ions and small molecules and the active, nuclear transport receptor-mediated bidirectional transport of macromolecules such as proteins, RNAs, ribonucleoparticles (RNPs), and ribosomal subunits across the nuclear envelope. Due to its 8-fold rotational symmetry, all subunits are present with 8 copies or multiples thereof. Interacts with NAB2, a hnRNP required for mRNA export. Interacts with MLP2. May be phosphorylated by CDC28.

The protein resides in the nucleus. It localises to the nuclear pore complex. Its function is as follows. Together with the closely related MLP2, involved in the structural and functional organization of perinuclear chromatin. Together with MLP2, associates with the nuclear pore complex and form filamentous structures along the nuclear periphery. Has a role in the localization of Esc1 to nucleolar regions. Together with MLP2, mediates tethering of the some telomeres to the nuclear periphery, probably mediated by YKU70/YKU80 (HDF1/HDF2) heterodimer and show perinuclear location dependent silencing. MLP1 and MLP2 are involved in telomere length regulation but not silencing or telomere anchoring. Recognizes the 5'-splice site of pre-mRNAs and retains unspliced pre-mRNA in the nucleus without affecting splicing itself. This chain is Protein MLP1 (MLP1), found in Saccharomyces cerevisiae (strain ATCC 204508 / S288c) (Baker's yeast).